The primary structure comprises 270 residues: Putative methylsterol monooxygenase DDB_G0269788 (270 aa).

3 helical membrane-spanning segments follow: residues 31–51 (FIAH…CDFM), 82–102 (IFVQ…IGLS), and 110–130 (IPYL…YFYW). In terms of domain architecture, Fatty acid hydroxylase spans 118–249 (ACCFLIEDFY…FTYLDKIFGT (132 aa)). The short motif at 132–136 (HRALH) is the Histidine box-1 element. Positions 145 to 149 (HKVHH) match the Histidine box-2 motif. Residues 224–230 (FHDFHHE) carry the Histidine box-3 motif.

Belongs to the sterol desaturase family. The cofactor is Fe cation.

The protein localises to the endoplasmic reticulum membrane. It carries out the reaction 4,4-dimethyl-5alpha-cholest-7-en-3beta-ol + 6 Fe(II)-[cytochrome b5] + 3 O2 + 5 H(+) = 4alpha-carboxy-4beta-methyl-5alpha-cholest-7-ene-3beta-ol + 6 Fe(III)-[cytochrome b5] + 4 H2O. It participates in steroid biosynthesis; zymosterol biosynthesis; zymosterol from lanosterol: step 3/6. The chain is Putative methylsterol monooxygenase DDB_G0269788 from Dictyostelium discoideum (Social amoeba).